Here is a 56-residue protein sequence, read N- to C-terminus: Small ribosomal subunit protein uS14 (56 aa).

The Zn(2+) site is built by cysteine 21, cysteine 24, cysteine 39, and cysteine 42.

Belongs to the universal ribosomal protein uS14 family. As to quaternary structure, component of the 40S small ribosomal subunit. It depends on Zn(2+) as a cofactor.

It is found in the cytoplasm. It localises to the cytosol. The protein resides in the rough endoplasmic reticulum. In Lysiphlebus testaceipes (Greenbugs aphid parastoid), this protein is Small ribosomal subunit protein uS14 (RpS29).